Consider the following 303-residue polypeptide: 2-dehydropantoate 2-reductase (303 aa).

NADP(+) is bound by residues Gly-7 to Gly-12, Asn-98, and Ala-122. Substrate is bound at residue Asn-98. Lys-176 functions as the Proton donor in the catalytic mechanism. Asn-180, Asn-184, Asn-194, and Ser-244 together coordinate substrate. Glu-256 is an NADP(+) binding site.

The protein belongs to the ketopantoate reductase family. Monomer.

It is found in the cytoplasm. It catalyses the reaction (R)-pantoate + NADP(+) = 2-dehydropantoate + NADPH + H(+). It participates in cofactor biosynthesis; (R)-pantothenate biosynthesis; (R)-pantoate from 3-methyl-2-oxobutanoate: step 2/2. Catalyzes the NADPH-dependent reduction of ketopantoate into pantoic acid. The sequence is that of 2-dehydropantoate 2-reductase (panE) from Escherichia coli O157:H7.